The primary structure comprises 513 residues: Flavonoid 3'-monooxygenase (513 aa).

A helical membrane pass occupies residues 1-21; it reads MATLFLTILLATVLFLILRIF. Residues 22–513 are Cytoplasmic-facing; that stretch reads SHRRNRSHNN…APNVYGLGSG (492 aa). Residue cysteine 445 participates in heme binding.

Belongs to the cytochrome P450 family. Heme is required as a cofactor. High expression in siliques and to a lower extent in stems, flowers and senescing leaves.

It localises to the endoplasmic reticulum membrane. The enzyme catalyses a 3'-unsubstituted flavone + reduced [NADPH--hemoprotein reductase] + O2 = a 3'-hydroxyflavone + oxidized [NADPH--hemoprotein reductase] + H2O + H(+). The protein operates within secondary metabolite biosynthesis; flavonoid biosynthesis. Catalyzes the 3'-hydroxylation of the flavonoid B-ring to the 3',4'-hydroxylated state. Convert naringenin to eriodictyol and dihydrokaempferol to dihydroquercetin. This chain is Flavonoid 3'-monooxygenase (CYP75B1), found in Arabidopsis thaliana (Mouse-ear cress).